The sequence spans 371 residues: Ferrochelatase (371 aa).

H218 and E299 together coordinate Fe cation.

Belongs to the ferrochelatase family.

It is found in the cytoplasm. It catalyses the reaction heme b + 2 H(+) = protoporphyrin IX + Fe(2+). It participates in porphyrin-containing compound metabolism; protoheme biosynthesis; protoheme from protoporphyrin-IX: step 1/1. In terms of biological role, catalyzes the ferrous insertion into protoporphyrin IX. The chain is Ferrochelatase from Ralstonia nicotianae (strain ATCC BAA-1114 / GMI1000) (Ralstonia solanacearum).